We begin with the raw amino-acid sequence, 429 residues long: Probable M18 family aminopeptidase 2 (429 aa).

3 residues coordinate Zn(2+): His-82, His-156, and His-401.

This sequence belongs to the peptidase M18 family. Zn(2+) serves as cofactor.

This is Probable M18 family aminopeptidase 2 from Pseudomonas entomophila (strain L48).